A 403-amino-acid polypeptide reads, in one-letter code: PP2A regulatory subunit TAP46 (403 aa).

Disordered stretches follow at residues 158-184 (ERRGRSTKAAALSSPVETEEDDVLDDD) and 351-403 (ANSS…TPCG). 2 stretches are compositionally biased toward acidic residues: residues 174 to 184 (ETEEDDVLDDD) and 366 to 375 (EDDEEDDDDA). The span at 376–391 (AQDKARAWDDWKDDNP) shows a compositional bias: basic and acidic residues.

It belongs to the IGBP1/TAP42 family.

In terms of biological role, involved in the regulation of the TOR signaling pathway. Seems to act as a regulator of PP2A catalytic activity. The chain is PP2A regulatory subunit TAP46 from Nicotiana tabacum (Common tobacco).